The sequence spans 259 residues: Beta-glucanase (259 aa).

Positions 1-31 (MVKSKYLVFISVFSLLFGVFVVGFSHQGVKA) are cleaved as a signal peptide. The 221-residue stretch at 35 to 255 (RPMGTAFYES…WVRYTPLQNY (221 aa)) folds into the GH16 domain. The active-site Nucleophile is E142. Catalysis depends on E146, which acts as the Proton donor.

It belongs to the glycosyl hydrolase 16 family.

The catalysed reaction is Hydrolysis of (1-&gt;4)-beta-D-glucosidic linkages in beta-D-glucans containing (1-&gt;3)- and (1-&gt;4)-bonds.. Functionally, hydrolyzes B-glucans containing mixed beta-1,3 and beta-1,4 linkages. The polypeptide is Beta-glucanase (bglBB) (Brevibacillus brevis (Bacillus brevis)).